A 571-amino-acid chain; its full sequence is Proline--tRNA ligase (571 aa).

It belongs to the class-II aminoacyl-tRNA synthetase family. ProS type 1 subfamily. In terms of assembly, homodimer.

The protein resides in the cytoplasm. The enzyme catalyses tRNA(Pro) + L-proline + ATP = L-prolyl-tRNA(Pro) + AMP + diphosphate. In terms of biological role, catalyzes the attachment of proline to tRNA(Pro) in a two-step reaction: proline is first activated by ATP to form Pro-AMP and then transferred to the acceptor end of tRNA(Pro). As ProRS can inadvertently accommodate and process non-cognate amino acids such as alanine and cysteine, to avoid such errors it has two additional distinct editing activities against alanine. One activity is designated as 'pretransfer' editing and involves the tRNA(Pro)-independent hydrolysis of activated Ala-AMP. The other activity is designated 'posttransfer' editing and involves deacylation of mischarged Ala-tRNA(Pro). The misacylated Cys-tRNA(Pro) is not edited by ProRS. This is Proline--tRNA ligase from Pasteurella multocida (strain Pm70).